The following is a 141-amino-acid chain: Ribosome-binding factor A (141 aa).

The protein belongs to the RbfA family. In terms of assembly, monomer. Binds 30S ribosomal subunits, but not 50S ribosomal subunits or 70S ribosomes.

It is found in the cytoplasm. Functionally, one of several proteins that assist in the late maturation steps of the functional core of the 30S ribosomal subunit. Associates with free 30S ribosomal subunits (but not with 30S subunits that are part of 70S ribosomes or polysomes). Required for efficient processing of 16S rRNA. May interact with the 5'-terminal helix region of 16S rRNA. This Beijerinckia indica subsp. indica (strain ATCC 9039 / DSM 1715 / NCIMB 8712) protein is Ribosome-binding factor A.